A 167-amino-acid polypeptide reads, in one-letter code: Transcription factor HES-5 (167 aa).

In terms of domain architecture, bHLH spans 16-72 (KNRLRKPVVEKMRRDRINSSIEQLKLLLEQEFARHQPNSKLEKADILEMAVSYLKHS). The region spanning 88–119 (YSEGYSWCLQEAVQFLTLHAASDTQMKLLYHF) is the Orange domain. Residues 124–138 (APAAPAKEPPAPGAA) show a composition bias toward pro residues. Residues 124–167 (APAAPAKEPPAPGAAPQPARSSAKAAAAAVSTSRQPACGLWRPW) form a disordered region. The segment covering 139–160 (PQPARSSAKAAAAAVSTSRQPA) has biased composition (low complexity). Positions 164–167 (WRPW) match the WRPW motif motif.

Transcription repression requires formation of a complex with a corepressor protein of the Groucho/TLE family.

The protein localises to the nucleus. Transcriptional repressor of genes that require a bHLH protein for their transcription. Plays an important role as neurogenesis negative regulator. The polypeptide is Transcription factor HES-5 (Hes5) (Mus musculus (Mouse)).